The following is a 323-amino-acid chain: Ribosomal protein L11 methyltransferase (323 aa).

S-adenosyl-L-methionine contacts are provided by Thr160, Gly184, Asp206, and Asn257.

Belongs to the methyltransferase superfamily. PrmA family.

The protein localises to the cytoplasm. It catalyses the reaction L-lysyl-[protein] + 3 S-adenosyl-L-methionine = N(6),N(6),N(6)-trimethyl-L-lysyl-[protein] + 3 S-adenosyl-L-homocysteine + 3 H(+). Functionally, methylates ribosomal protein L11. The protein is Ribosomal protein L11 methyltransferase of Agathobacter rectalis (strain ATCC 33656 / DSM 3377 / JCM 17463 / KCTC 5835 / VPI 0990) (Eubacterium rectale).